Consider the following 184-residue polypeptide: Dirigent protein 13 (184 aa).

A signal peptide spans 1-25 (MANQIYIISLIFLSVLLYQSTTVLS). A disulfide bond links Cys-36 and Cys-182. N-linked (GlcNAc...) asparagine glycosylation is found at Asn-55 and Asn-119.

Belongs to the plant dirigent protein family. In terms of assembly, homodimer. Expressed in root vasculature and meristems, cotyledons, flowers, siliques, and leaf trichomes. Localized in the interfascicular/vascular cambia and developing xylem.

The protein localises to the secreted. Its subcellular location is the extracellular space. The protein resides in the apoplast. Its function is as follows. Dirigent proteins impart stereoselectivity on the phenoxy radical-coupling reaction, yielding optically active lignans from two molecules of coniferyl alcohol in the biosynthesis of lignans, flavonolignans, and alkaloids and thus plays a central role in plant secondary metabolism. This Arabidopsis thaliana (Mouse-ear cress) protein is Dirigent protein 13 (DIR13).